The chain runs to 401 residues: Argininosuccinate synthase (401 aa).

8 to 16 contributes to the ATP binding site; the sequence is AYSGGLDTS. Tyrosine 86 is a binding site for L-citrulline. Glycine 116 contacts ATP. Positions 118, 122, and 123 each coordinate L-aspartate. An L-citrulline-binding site is contributed by asparagine 122. L-citrulline contacts are provided by arginine 126, serine 174, glutamate 258, and tyrosine 270.

This sequence belongs to the argininosuccinate synthase family. Type 1 subfamily. Homotetramer.

It localises to the cytoplasm. The catalysed reaction is L-citrulline + L-aspartate + ATP = 2-(N(omega)-L-arginino)succinate + AMP + diphosphate + H(+). It functions in the pathway amino-acid biosynthesis; L-arginine biosynthesis; L-arginine from L-ornithine and carbamoyl phosphate: step 2/3. The polypeptide is Argininosuccinate synthase (Acidothermus cellulolyticus (strain ATCC 43068 / DSM 8971 / 11B)).